Here is an 88-residue protein sequence, read N- to C-terminus: Small ribosomal subunit protein bS16 (88 aa).

The protein belongs to the bacterial ribosomal protein bS16 family.

This chain is Small ribosomal subunit protein bS16, found in Desulfitobacterium hafniense (strain DSM 10664 / DCB-2).